We begin with the raw amino-acid sequence, 60 residues long: Conotoxin Pu5.6 (60 aa).

A signal peptide spans 1–19; it reads MRCVPVFVILLLLIASAAS. A propeptide spanning residues 20 to 47 is cleaved from the precursor; the sequence is IDAQQKTKDDAPLTSLNDNALQQHWNKR.

Belongs to the conotoxin T superfamily. Post-translationally, contains 2 disulfide bonds that can be either 'C1-C3, C2-C4' or 'C1-C4, C2-C3', since these disulfide connectivities have been observed for conotoxins with cysteine framework V (for examples, see AC P0DQQ7 and AC P81755). Expressed by the venom duct.

Its subcellular location is the secreted. This Conus pulicarius (Flea-bitten cone) protein is Conotoxin Pu5.6.